The chain runs to 607 residues: Zinc metalloproteinase-disintegrin-like atrase-A (607 aa).

The signal sequence occupies residues 1 to 20 (MIQALLVIICLAVFPHQGSS). A propeptide spanning residues 21-196 (IILESGNVND…KTSQLTNTPE (176 aa)) is cleaved from the precursor. Residues 205-398 (KYIEFYLVVD…ERPQCILNKP (194 aa)) enclose the Peptidase M12B domain. Residue glutamate 208 participates in Ca(2+) binding. N-linked (GlcNAc...) asparagine glycans are attached at residues asparagine 220 and asparagine 270. Aspartate 290 contacts Ca(2+). Residue asparagine 301 is glycosylated (N-linked (GlcNAc...) asparagine). Cystine bridges form between cysteine 314–cysteine 393, cysteine 353–cysteine 377, and cysteine 355–cysteine 360. Positions 338, 342, and 348 each coordinate Zn(2+). Positions 393, 396, 411, 413, 415, 418, and 421 each coordinate Ca(2+). The 87-residue stretch at 406–492 (RPVCGNNFVE…ECPTDSLQRN (87 aa)) folds into the Disintegrin domain. 14 cysteine pairs are disulfide-bonded: cysteine 409/cysteine 438, cysteine 420/cysteine 433, cysteine 422/cysteine 428, cysteine 432/cysteine 455, cysteine 446/cysteine 452, cysteine 451/cysteine 477, cysteine 464/cysteine 484, cysteine 471/cysteine 503, cysteine 496/cysteine 508, cysteine 515/cysteine 565, cysteine 530/cysteine 573, cysteine 543/cysteine 553, cysteine 560/cysteine 599, and cysteine 593/cysteine 604. A glycan (N-linked (GlcNAc...) asparagine) is linked at asparagine 434. The D/ECD-tripeptide signature appears at 470–472 (DCD). Ca(2+) contacts are provided by aspartate 472, leucine 473, glutamate 475, aspartate 487, and serine 488. The N-linked (GlcNAc...) asparagine glycan is linked to asparagine 522.

This sequence belongs to the venom metalloproteinase (M12B) family. P-III subfamily. P-IIIa sub-subfamily. In terms of assembly, monomer. It depends on Zn(2+) as a cofactor. Expressed by the venom gland.

Its subcellular location is the secreted. Functionally, snake venom zinc metalloproteinase that inhibits platelet aggregation by cleaving platelet glycoprotein Ib alpha (GP1BA) at Glu-298/Asp-299, and abolishes binding of von Willebrand factor (VWF) to GPIBA. The polypeptide is Zinc metalloproteinase-disintegrin-like atrase-A (Naja atra (Chinese cobra)).